The primary structure comprises 174 residues: Small ribosomal subunit protein uS5c (174 aa).

In terms of domain architecture, S5 DRBM spans 17-80 (WEERVVQVKR…TDAKKHLVTV (64 aa)).

It belongs to the universal ribosomal protein uS5 family. As to quaternary structure, part of the 30S ribosomal subunit. Contacts protein S4.

It localises to the plastid. Its subcellular location is the chloroplast. Functionally, with S4 and S12 plays an important role in translational accuracy. The polypeptide is Small ribosomal subunit protein uS5c (rps5) (Porphyra purpurea (Red seaweed)).